Consider the following 612-residue polypeptide: Arginine--tRNA ligase (612 aa).

The 'HIGH' region signature appears at 152-162 (PNIAKEMHVGH).

The protein belongs to the class-I aminoacyl-tRNA synthetase family. Monomer.

It localises to the cytoplasm. It carries out the reaction tRNA(Arg) + L-arginine + ATP = L-arginyl-tRNA(Arg) + AMP + diphosphate. This Prochlorococcus marinus (strain MIT 9313) protein is Arginine--tRNA ligase.